A 949-amino-acid chain; its full sequence is Insulin receptor substrate 1 (949 aa).

Residues Gly8–Arg109 enclose the PH domain. In terms of domain architecture, IRS-type PTB spans Tyr122–Asn236. The disordered stretch occupies residues Pro247–Val270. A phosphoserine mark is found at Ser286, Ser287, and Ser342. The segment covering Arg304 to Phe345 has biased composition (polar residues). Positions Arg304 to Tyr373 are disordered. A Phosphotyrosine; by INSR modification is found at Tyr410. Positions Tyr410–Met413 match the YXXM motif 1 motif. Residues Arg530–Pro556 form a disordered region. Ser554 carries the phosphoserine modification. The YXXM motif 2 signature appears at Tyr640–Met643. Over residues Arg696 to Ser706 the composition is skewed to basic and acidic residues. The interval Arg696–Lys718 is disordered. Tyr892 carries the post-translational modification Phosphotyrosine; by INSR. Positions Ala906 to Thr949 are disordered. Phosphoserine occurs at positions 913 and 916. At Tyr929 the chain carries Phosphotyrosine; by INSR. Residues Ser937 to Thr949 are compositionally biased toward low complexity.

As to quaternary structure, bindings to phosphatidylinositol 3-kinase and SHP2.

In terms of biological role, activates phosphatidylinositol 3-kinase when bound to the regulatory p85 subunit. May mediate the control of various cellular processes by insulin-like peptides. When phosphorylated by the insulin receptor binds specifically to various cellular proteins containing SH2 domains. Involved in control of cell proliferation, cell size, and body and organ growth throughout development. Also has a role in a signaling pathway controlling the physiological response required to endure periods of low nutrient conditions. Insulin/insulin-like growth factor (IGF) signaling pathway has a role in regulating aging and is necessary in the ovary for vitellogenic maturation. The chain is Insulin receptor substrate 1 from Drosophila yakuba (Fruit fly).